We begin with the raw amino-acid sequence, 623 residues long: Scarecrow-like protein 22 (623 aa).

2 disordered regions span residues 62-90 and 179-203; these read RSPSPFVSSSTTTLSSSHGGPSGGGAAAA and PNPGFFSDPPSSPPAKRLNSGQPGS. Over residues 63–80 the composition is skewed to low complexity; sequence SPSPFVSSSTTTLSSSHG. Residues 235-622 enclose the GRAS domain; sequence NDQDQSAVII…KELVTVSAWK (388 aa). The tract at residues 242 to 311 is leucine repeat I (LRI); sequence VIIDQLFSAA…ALHSLLQDSS (70 aa). Residues 330-398 form a VHIID region; sequence YRAFSETSPF…SSAPSLKITA (69 aa). A VHIID motif is present at residues 361–365; sequence IHIVD. Positions 413 to 448 are leucine repeat II (LRII); sequence FTEENLRSFAGETGVSFEIELLNMEILLNPTYWPLS. The tract at residues 458-545 is PFYRE; that stretch reads IAVNLPISSM…RFCVQPSIQK (88 aa). The interval 548–622 is SAW; the sequence is TNRYRWMERS…KELVTVSAWK (75 aa).

It belongs to the GRAS family. In terms of tissue distribution, expressed in seedlings, roots, leaves and flowers.

It localises to the nucleus. In terms of biological role, probable transcription factor involved in plant development. This chain is Scarecrow-like protein 22 (SCL22), found in Arabidopsis thaliana (Mouse-ear cress).